The sequence spans 39 residues: MDWRVLVVVGPLLIAASWAVFNIGAAAIRQLQEFRSRES.

Residues Val5–Ile23 traverse the membrane as a helical segment.

Belongs to the PsbY family. As to quaternary structure, PSII is composed of 1 copy each of membrane proteins PsbA, PsbB, PsbC, PsbD, PsbE, PsbF, PsbH, PsbI, PsbJ, PsbK, PsbL, PsbM, PsbT, PsbX, PsbY, PsbZ, Psb30/Ycf12, peripheral proteins PsbO, CyanoQ (PsbQ), PsbU, PsbV and a large number of cofactors. It forms dimeric complexes.

The protein localises to the cellular thylakoid membrane. In terms of biological role, loosely associated component of the core of photosystem II (PSII), it is not always seen in crystals. PSII is a light-driven water plastoquinone oxidoreductase, using light energy to abstract electrons from H(2)O, generating a proton gradient subsequently used for ATP formation. The sequence is that of Photosystem II reaction center protein Y from Rippkaea orientalis (strain PCC 8801 / RF-1) (Cyanothece sp. (strain PCC 8801)).